A 108-amino-acid polypeptide reads, in one-letter code: Glutaredoxin-like protein YDR286C homolog (108 aa).

A disulfide bridge links Cys22 with Cys25.

Belongs to the glutaredoxin family. YDR286C subfamily.

This chain is Glutaredoxin-like protein YDR286C homolog, found in Dictyostelium discoideum (Social amoeba).